We begin with the raw amino-acid sequence, 264 residues long: Glutamate racemase (264 aa).

Substrate contacts are provided by residues 10 to 11 and 42 to 43; these read DS and YG. The Proton donor/acceptor role is filled by Cys73. 74 to 75 lines the substrate pocket; it reads NT. Cys183 serves as the catalytic Proton donor/acceptor. 184–185 serves as a coordination point for substrate; the sequence is TH.

This sequence belongs to the aspartate/glutamate racemases family.

It carries out the reaction L-glutamate = D-glutamate. The protein operates within cell wall biogenesis; peptidoglycan biosynthesis. Its function is as follows. Provides the (R)-glutamate required for cell wall biosynthesis. This is Glutamate racemase from Streptococcus sanguinis (strain SK36).